Consider the following 213-residue polypeptide: Pyridoxine/pyridoxamine 5'-phosphate oxidase (213 aa).

Substrate is bound by residues 10–13 (REEY) and Lys68. FMN contacts are provided by residues 63–68 (RMLLLK), 78–79 (FT), Lys85, and Gln107. 3 residues coordinate substrate: Tyr125, Arg129, and Ser133. Residues 142–143 (QS) and Trp186 contribute to the FMN site. 192 to 194 (RLH) is a substrate binding site. An FMN-binding site is contributed by Arg196.

The protein belongs to the pyridoxamine 5'-phosphate oxidase family. As to quaternary structure, homodimer. FMN serves as cofactor.

The enzyme catalyses pyridoxamine 5'-phosphate + O2 + H2O = pyridoxal 5'-phosphate + H2O2 + NH4(+). The catalysed reaction is pyridoxine 5'-phosphate + O2 = pyridoxal 5'-phosphate + H2O2. It functions in the pathway cofactor metabolism; pyridoxal 5'-phosphate salvage; pyridoxal 5'-phosphate from pyridoxamine 5'-phosphate: step 1/1. Its pathway is cofactor metabolism; pyridoxal 5'-phosphate salvage; pyridoxal 5'-phosphate from pyridoxine 5'-phosphate: step 1/1. Catalyzes the oxidation of either pyridoxine 5'-phosphate (PNP) or pyridoxamine 5'-phosphate (PMP) into pyridoxal 5'-phosphate (PLP). This Nocardioides sp. (strain ATCC BAA-499 / JS614) protein is Pyridoxine/pyridoxamine 5'-phosphate oxidase.